Consider the following 114-residue polypeptide: Iron-sulfur cluster insertion protein ErpA (114 aa).

Positions 42, 106, and 108 each coordinate iron-sulfur cluster.

This sequence belongs to the HesB/IscA family. Homodimer. Iron-sulfur cluster serves as cofactor.

Required for insertion of 4Fe-4S clusters for at least IspG. The chain is Iron-sulfur cluster insertion protein ErpA from Wigglesworthia glossinidia brevipalpis.